The following is a 393-amino-acid chain: NAD(P)H-quinone oxidoreductase subunit H, chloroplastic (393 aa).

It belongs to the complex I 49 kDa subunit family. NDH is composed of at least 16 different subunits, 5 of which are encoded in the nucleus.

It localises to the plastid. The protein localises to the chloroplast thylakoid membrane. The enzyme catalyses a plastoquinone + NADH + (n+1) H(+)(in) = a plastoquinol + NAD(+) + n H(+)(out). The catalysed reaction is a plastoquinone + NADPH + (n+1) H(+)(in) = a plastoquinol + NADP(+) + n H(+)(out). Functionally, NDH shuttles electrons from NAD(P)H:plastoquinone, via FMN and iron-sulfur (Fe-S) centers, to quinones in the photosynthetic chain and possibly in a chloroplast respiratory chain. The immediate electron acceptor for the enzyme in this species is believed to be plastoquinone. Couples the redox reaction to proton translocation, and thus conserves the redox energy in a proton gradient. This chain is NAD(P)H-quinone oxidoreductase subunit H, chloroplastic, found in Eucalyptus globulus subsp. globulus (Tasmanian blue gum).